Consider the following 247-residue polypeptide: 3-deoxy-manno-octulosonate cytidylyltransferase (247 aa).

Belongs to the KdsB family.

It localises to the cytoplasm. It carries out the reaction 3-deoxy-alpha-D-manno-oct-2-ulosonate + CTP = CMP-3-deoxy-beta-D-manno-octulosonate + diphosphate. Its pathway is nucleotide-sugar biosynthesis; CMP-3-deoxy-D-manno-octulosonate biosynthesis; CMP-3-deoxy-D-manno-octulosonate from 3-deoxy-D-manno-octulosonate and CTP: step 1/1. It functions in the pathway bacterial outer membrane biogenesis; lipopolysaccharide biosynthesis. In terms of biological role, activates KDO (a required 8-carbon sugar) for incorporation into bacterial lipopolysaccharide in Gram-negative bacteria. The protein is 3-deoxy-manno-octulosonate cytidylyltransferase of Methylobacterium nodulans (strain LMG 21967 / CNCM I-2342 / ORS 2060).